The primary structure comprises 159 residues: 2-C-methyl-D-erythritol 2,4-cyclodiphosphate synthase (159 aa).

Positions 8 and 10 each coordinate a divalent metal cation. Residues 8-10 and 34-35 contribute to the 4-CDP-2-C-methyl-D-erythritol 2-phosphate site; these read DVH and HS. His42 contributes to the a divalent metal cation binding site. Residues 56 to 58, 61 to 65, 132 to 135, Phe139, and Arg142 each bind 4-CDP-2-C-methyl-D-erythritol 2-phosphate; these read DIG, FPDTD, and TTTE.

This sequence belongs to the IspF family. As to quaternary structure, homotrimer. The cofactor is a divalent metal cation.

It catalyses the reaction 4-CDP-2-C-methyl-D-erythritol 2-phosphate = 2-C-methyl-D-erythritol 2,4-cyclic diphosphate + CMP. It functions in the pathway isoprenoid biosynthesis; isopentenyl diphosphate biosynthesis via DXP pathway; isopentenyl diphosphate from 1-deoxy-D-xylulose 5-phosphate: step 4/6. Functionally, involved in the biosynthesis of isopentenyl diphosphate (IPP) and dimethylallyl diphosphate (DMAPP), two major building blocks of isoprenoid compounds. Catalyzes the conversion of 4-diphosphocytidyl-2-C-methyl-D-erythritol 2-phosphate (CDP-ME2P) to 2-C-methyl-D-erythritol 2,4-cyclodiphosphate (ME-CPP) with a corresponding release of cytidine 5-monophosphate (CMP). This chain is 2-C-methyl-D-erythritol 2,4-cyclodiphosphate synthase, found in Syntrophobacter fumaroxidans (strain DSM 10017 / MPOB).